The following is a 1792-amino-acid chain: MKDNTHSTTLIFFGNEFPNDDLKGLFRCLLRLSKDRRFRQLAAFLEESTLVLKKEVAALPQPLRDLVPHFHTVLPLAELGDFRQGPLGAAMESALLTVLELGMFIGHYEAEGRDWNLLEHNTTLAGLSIGLLAAAGVALSTNLAEVAQNGAECVRVSFRLGVYVSEISRKLEAPQADGTLLSWAHVVTGETKSAIQDELSKYNSESGTPELLKVFISAADKTSVSVSGPPSRMKACFSSSHLLRYSKSFALPVYDGLCHASHLYNEDSINTVINSAESVIPVSRPVQLSLHSSNTGQPFPAATAHELFQAIGKELLTGTIYLDNIIDGIIKRIEGFNPSDLQVETFRTSIVFKSVRAALEGEFPDLEIKITDLIPWAFRDYGPRLPRSFAHSKLAVVGMACRMPGGGNDTELFWEILEQGRDVHTTVPADRFDLSTHYDPSGKTDNAATTPYGNFVDKPGLFDAGFFNMSPKEAEQTDPMQRLALVTAYEALEMAGVVPGRTASSNPKRIGTYYGQASDDWRELNASQNIGTYAVTGGVRAFGNGRINYYFKFPGPSFNVDTACSSGLAAVQVACSALWAGEADTVLAGGLNIITDPDNYAGLGCGHFLSKTGQCKVWDETADGYCRADGIGSVVIKRLEDAEADNDNIIAVVLSAATNHSAEAISITHPHAGNQKDNYRQVIDMAAVNPLDVSYIELHGTGTQAGDAVESESVLDVFAPRSPPRRPDQLLQLGAVKSNIGHGEAAAGIASFLKVLLMYQKNMIPAHIGIHTVINPTIPKDLEQRRVRLTQTNTPWPRLPGKKRIAMVNSFGAHGGNTTVLLEDAPERNKDVARENRSTHTVVISAKSKKSLQANIANLALHLEENPDIDLGDLSYTTCARRIHYTLRVGFAVSSIAGLKEALRKAGEKEALAEVRPTPGDVPPVVFAFTGQGAFYQGIARELFESFSYFRDEVLQLDHIVQRLGFQSIVPVIDGSIGENPSATVSQLSIVVIEIALAHLWTLLLGMQPSAVIGHSLGEYAALVVAGVLSTADGIFLAGRRAQLIEKCCTAGSHAMLSVRASVSEISKLLGNAKYEISCQNTLNDTVIGGTKANLDAARQVLESSSIKCVPVDVPFAFHTEQVDPVLDQLTRVAETVHFKAPSIPIISPLLRSVVFDGKTINSSYLIRATREPVHFAGAIEAAQDLGMVNDKTVWVDVGPHPICASFVRSLIPKARVASSCRRNEDNYATMAKNLVALHLAGCTPVWDEYFRANEKAYNLLTLPKYAWNDVNYWIQYIGTWTLDKAHLKYTGTNGPPQVKPSSSALRTSLIHEIIEETIGEETATLKTVSDLQHPEFLEAVHGHRMNNCGVATSSIWTDMSLTVGEYLYNKLAPGSKVHMNVGELEVLHATVANPAKNCTQNLYLDAHLDLRTQKMSLAWFNVDPATGSKAAESYATGSVRFEADAEKWKSEWERLTHLVLGRIETLESMAKDGQASQLSKALSYALFKNVVDYADHYRGMERVVMHDYEAFCDIKLTPERRGMFHTPPHWIDSVSHLAGLIMNGSDASNTRDYFFVTPGYESFRLLAKLDPDVKYQSYVRMFPLPEANMYGGDLYILQDNQIIGMVGHFKFRRVPRLLMDRFFSAEAASKQSVAASASSAPKTATKHAPLPASKPAQAPAEPTPSSLPTVQAQNTSPPQQVTPSKPAMNGVKTPEEEKPGKADAEGPNGTTSQPEATGVVGQCLQLIANETGQSVNELTPDATFVQLGVDSLMSLVLSEKFRAELGLEVKSSLFLECPTVGDMMDWLEQYC.

The tract at residues 1-395 (MKDNTHSTTL…PRSFAHSKLA (395 aa)) is N-terminal acylcarrier protein transacylase domain (SAT). A Ketosynthase family 3 (KS3) domain is found at 391–824 (HSKLAVVGMA…GGNTTVLLED (434 aa)). Residues Cys564, His699, and His742 each act as for beta-ketoacyl synthase activity in the active site. Residues 926-1243 (VFAFTGQGAF…NLVALHLAGC (318 aa)) form a malonyl-CoA:ACP transacylase (MAT) domain region. The segment at 1308–1625 (TSLIHEIIEE…PRLLMDRFFS (318 aa)) is product template (PT) domain. Residues 1312 to 1447 (HEIIEETIGE…GSVRFEADAE (136 aa)) form an N-terminal hotdog fold region. The region spanning 1312-1621 (HEIIEETIGE…FRRVPRLLMD (310 aa)) is the PKS/mFAS DH domain. The active-site Proton acceptor; for dehydratase activity is the His1344. The C-terminal hotdog fold stretch occupies residues 1475-1621 (QASQLSKALS…FRRVPRLLMD (147 aa)). The active-site Proton donor; for dehydratase activity is Asp1533. A compositionally biased stretch (low complexity) spans 1634 to 1649 (VAASASSAPKTATKHA). The segment at 1634-1716 (VAASASSAPK…GPNGTTSQPE (83 aa)) is disordered. Residues 1664–1684 (TPSSLPTVQAQNTSPPQQVTP) are compositionally biased toward polar residues. The segment covering 1694-1705 (TPEEEKPGKADA) has biased composition (basic and acidic residues). One can recognise a Carrier domain in the interval 1715–1792 (PEATGVVGQC…DMMDWLEQYC (78 aa)). Ser1752 carries the post-translational modification O-(pantetheine 4'-phosphoryl)serine.

The cofactor is pantetheine 4'-phosphate.

The enzyme catalyses holo-[ACP] + 8 malonyl-CoA + acetyl-CoA + 8 H(+) = 3,6,8,9-tetrahydroxy-1-oxo-3-(2-oxopropyl)-1,2,3,4-tetrahydroanthracene-2-carboxyl-[ACP] + 8 CO2 + 9 CoA + 2 H2O. It functions in the pathway secondary metabolite biosynthesis. Functionally, non-reducing polyketide synthase (NRPKS); part of the gene cluster that mediates the biosynthesis of asperthecin, an anthraquinone pigment. Catalyzes the formation of the aromatic polyketide from acetyl coenzyme A and seven malonyl coenzyme A molecules. Through its product template (PT) domain, catalyzes the cyclization of the polyketide backbone via C6-C11 aldolcondensation. Polyketide is subsequently hydrolyzed from the NRPKS by the action of the hydrolase aptB into endocrocin-9-anthrone. Endocrocin-9-anthrone is then oxidized into endocrocin by aptC. Endocrocin is likely to decarboxylate spontaneously to form emodin which explains why there is no decarboxylase in the asperthecin biosynthesis cluster. Finally, aptC or another endogenous oxygenase catalyzes additional oxidation steps to form asperthecin. The chain is Non-reducing polyketide synthase aptA from Emericella nidulans (strain FGSC A4 / ATCC 38163 / CBS 112.46 / NRRL 194 / M139) (Aspergillus nidulans).